Reading from the N-terminus, the 493-residue chain is Betaine aldehyde dehydrogenase (493 aa).

S32, I33, and D99 together coordinate K(+). 156–158 (GAW) is an NAD(+) binding site. Catalysis depends on K168, which acts as the Charge relay system. Residues 182 to 185 (KPSE) and 235 to 238 (SVPT) each bind NAD(+). L250 contacts K(+). E256 (proton acceptor) is an active-site residue. Positions 258, 290, and 390 each coordinate NAD(+). Catalysis depends on C290, which acts as the Nucleophile. C290 bears the Cysteine sulfenic acid (-SOH) mark. K(+)-binding residues include K460 and G463. E467 functions as the Charge relay system in the catalytic mechanism.

Belongs to the aldehyde dehydrogenase family. As to quaternary structure, dimer of dimers. Requires K(+) as cofactor.

It catalyses the reaction betaine aldehyde + NAD(+) + H2O = glycine betaine + NADH + 2 H(+). Its pathway is amine and polyamine biosynthesis; betaine biosynthesis via choline pathway; betaine from betaine aldehyde: step 1/1. Its function is as follows. Involved in the biosynthesis of the osmoprotectant glycine betaine. Catalyzes the irreversible oxidation of betaine aldehyde to the corresponding acid. The sequence is that of Betaine aldehyde dehydrogenase from Agrobacterium fabrum (strain C58 / ATCC 33970) (Agrobacterium tumefaciens (strain C58)).